The chain runs to 312 residues: Urease accessory protein UreD (312 aa).

The protein belongs to the UreD family. UreD, UreF and UreG form a complex that acts as a GTP-hydrolysis-dependent molecular chaperone, activating the urease apoprotein by helping to assemble the nickel containing metallocenter of UreC. The UreE protein probably delivers the nickel.

The protein resides in the cytoplasm. Functionally, required for maturation of urease via the functional incorporation of the urease nickel metallocenter. This chain is Urease accessory protein UreD, found in Marinomonas sp. (strain MWYL1).